The sequence spans 507 residues: Putative thymidine phosphorylase (507 aa).

This sequence belongs to the thymidine/pyrimidine-nucleoside phosphorylase family. Type 2 subfamily.

It carries out the reaction thymidine + phosphate = 2-deoxy-alpha-D-ribose 1-phosphate + thymine. The sequence is that of Putative thymidine phosphorylase from Ralstonia nicotianae (strain ATCC BAA-1114 / GMI1000) (Ralstonia solanacearum).